We begin with the raw amino-acid sequence, 163 residues long: MSDKAAGETKNGNGATTEPSLNILAQYVKDLSFESPGAPLSLRPREKAPSININVNVNANPLSETDFDVVLTLEAKAVDGKDILFNTELVYGGVFRIQGIPQEHMLPLLFIECPRLLFPFARQIIADATRNGGYPPLMIDPIDFAQMFQQRMAEEQAKSAVKS.

Belongs to the SecB family. As to quaternary structure, homotetramer, a dimer of dimers. One homotetramer interacts with 1 SecA dimer.

The protein localises to the cytoplasm. Functionally, one of the proteins required for the normal export of preproteins out of the cell cytoplasm. It is a molecular chaperone that binds to a subset of precursor proteins, maintaining them in a translocation-competent state. It also specifically binds to its receptor SecA. This is Protein-export protein SecB from Brucella abortus (strain S19).